Here is a 112-residue protein sequence, read N- to C-terminus: Thyroid transcription factor 1 (112 aa).

The segment at residues 1-60 is a DNA-binding region (homeobox); it reads RRNRRVLFSQAQVYELERRFKQQKYLSAPEREHLASMIHLTPTQVKIWFQNHRYKMKRQA. Residues 59–100 form a disordered region; that stretch reads QAKDKAAQQQLQQDSGGGGGGGGAGCPQQQQAQQQSPRRVAV. Residues 73-83 show a composition bias toward gly residues; the sequence is SGGGGGGGGAG. Low complexity predominate over residues 84–93; it reads CPQQQQAQQQ.

This sequence belongs to the NK-2 homeobox family. Post-translationally, phosphorylated on serine residues.

The protein resides in the nucleus. In terms of biological role, transcription factor that binds and activates the promoter of thyroid specific genes such as thyroglobulin, thyroperoxidase, and thyrotropin receptor. Crucial in the maintenance of the thyroid differentiation phenotype. May play a role in lung development and surfactant homeostasis. The sequence is that of Thyroid transcription factor 1 (TITF1) from Cavia porcellus (Guinea pig).